Here is a 126-residue protein sequence, read N- to C-terminus: Cytochrome c2 (126 aa).

Positions 17, 20, 21, and 101 each coordinate heme c.

This sequence belongs to the cytochrome c family. In terms of processing, binds 1 heme c group covalently per subunit.

The protein localises to the periplasm. In terms of biological role, cytochrome c2 is found mainly in purple, non-sulfur, photosynthetic bacteria where it functions as the electron donor to the oxidized bacteriochlorophyll in the photophosphorylation pathway. However, it may also have a role in the respiratory chain and is found in some non-photosynthetic bacteria. This is Cytochrome c2 from Rhodovulum adriaticum (Rhodopseudomonas adriatica).